The primary structure comprises 88 residues: Large ribosomal subunit protein bL27 (88 aa).

The interval 1 to 24 is disordered; it reads MAHKKGTGSTRNGRDSNSKRLGVK.

The protein belongs to the bacterial ribosomal protein bL27 family.

The polypeptide is Large ribosomal subunit protein bL27 (Prochlorococcus marinus (strain MIT 9313)).